Here is a 132-residue protein sequence, read N- to C-terminus: uncharacterized protein (132 aa).

This is an uncharacterized protein from Gallus gallus (Chicken).